The following is a 582-amino-acid chain: NAB transcription cofactor mab-10 (582 aa).

A compositionally biased stretch (low complexity) spans 1–70 (MSSSSSSSLP…SSSSQRQSTS (70 aa)). Disordered regions lie at residues 1-84 (MSSS…MPTP), 257-287 (SDQQ…PAGI), 333-365 (PPSS…SPFL), and 516-582 (SRKR…LPES). Residues 83–161 (TPTTLSEWQL…EYSQDQTAFN (79 aa)) are NCD1. Low complexity-rich tracts occupy residues 257 to 276 (SDQQ…STSS) and 333 to 345 (PPSS…PSTS). An NCD2 region spans residues 396-519 (LSTAQISRLA…GYNYAKSRKR (124 aa)). A compositionally biased stretch (basic and acidic residues) spans 573-582 (EKMKGELPES).

It belongs to the NAB family. In terms of assembly, interacts with transcription factor lin-29 (via C-terminus).

The protein resides in the nucleus. Transcriptional cofactor. Heterochronic protein, involved in timing of a subset of differentiation events during the larval-to-adult transition. Promotes hypodermal terminal differentiation, together with transcription factor lin-29, perhaps as part of a transcriptional complex. Involved in regulating molting by repressing the expression of nuclear hormone receptors nhr-23 and nhr-25 in the adult hypoderm, probably acting in concert with lin-29. In Caenorhabditis elegans, this protein is NAB transcription cofactor mab-10.